The primary structure comprises 83 residues: Small ribosomal subunit protein bS16 (83 aa).

It belongs to the bacterial ribosomal protein bS16 family.

This is Small ribosomal subunit protein bS16 from Herminiimonas arsenicoxydans.